Here is a 308-residue protein sequence, read N- to C-terminus: MRKITIATRGSKLALWQANHISDLLREEYPGIEVQLLKIKTKGDKILDVPLAKVGGKGLFVKEIEEALLDGRADLAVHSMKDVPTELPEGLEVGIIPPREAETDTLLSVKYDSLKDLPAGAVVGTSSLRRQSQVLALRDDLKIESLRGNLDTRVGKLLNGEFDAIVVATAGLNRLKLSAPKSEILGPPTFLPAVAQGALGIEYRIEDTEIQDILAFLHDEMTARQVKAERGFLTGLDGGCQVPIAAWSQLESDQVKLTGFVADIDGSSPIRMEKTGPAEDAWDIGLALAEEVLAAGAKEILDRVYDKC.

At C240 the chain carries S-(dipyrrolylmethanemethyl)cysteine.

The protein belongs to the HMBS family. Monomer. Requires dipyrromethane as cofactor.

The catalysed reaction is 4 porphobilinogen + H2O = hydroxymethylbilane + 4 NH4(+). Its pathway is porphyrin-containing compound metabolism; protoporphyrin-IX biosynthesis; coproporphyrinogen-III from 5-aminolevulinate: step 2/4. Its function is as follows. Tetrapolymerization of the monopyrrole PBG into the hydroxymethylbilane pre-uroporphyrinogen in several discrete steps. The sequence is that of Porphobilinogen deaminase from Maridesulfovibrio salexigens (strain ATCC 14822 / DSM 2638 / NCIMB 8403 / VKM B-1763) (Desulfovibrio salexigens).